A 278-amino-acid polypeptide reads, in one-letter code: uncharacterized protein (278 aa).

It is found in the cytoplasm. Its subcellular location is the nucleus. In terms of biological role, probable methyltransferase. This is an uncharacterized protein from Schizosaccharomyces pombe (strain 972 / ATCC 24843) (Fission yeast).